The primary structure comprises 388 residues: Succinate--CoA ligase [ADP-forming] subunit beta (388 aa).

The 228-residue stretch at 9–236 (KKLFAEHGVP…VAAVDPLEQK (228 aa)) folds into the ATP-grasp domain. Residues Lys45, 52-54 (GRG), Glu91, Ser94, and Glu99 contribute to the ATP site. Mg(2+)-binding residues include Asn191 and Asp205. Substrate-binding positions include Asn256 and 318-320 (GIT).

Belongs to the succinate/malate CoA ligase beta subunit family. As to quaternary structure, heterotetramer of two alpha and two beta subunits. It depends on Mg(2+) as a cofactor.

It catalyses the reaction succinate + ATP + CoA = succinyl-CoA + ADP + phosphate. The enzyme catalyses GTP + succinate + CoA = succinyl-CoA + GDP + phosphate. Its pathway is carbohydrate metabolism; tricarboxylic acid cycle; succinate from succinyl-CoA (ligase route): step 1/1. In terms of biological role, succinyl-CoA synthetase functions in the citric acid cycle (TCA), coupling the hydrolysis of succinyl-CoA to the synthesis of either ATP or GTP and thus represents the only step of substrate-level phosphorylation in the TCA. The beta subunit provides nucleotide specificity of the enzyme and binds the substrate succinate, while the binding sites for coenzyme A and phosphate are found in the alpha subunit. The chain is Succinate--CoA ligase [ADP-forming] subunit beta from Frankia casuarinae (strain DSM 45818 / CECT 9043 / HFP020203 / CcI3).